Consider the following 335-residue polypeptide: 34 kDa spicule matrix protein (335 aa).

Residues 1–17 (MKGLLLILASLVAIATG) form the signal peptide. One can recognise a C-type lectin domain in the interval 29–194 (SGASCYRYFN…ATAMRAFVCE (166 aa)). Cys-50 and Cys-193 are oxidised to a cystine. Residues 199–335 (QNIPPGQQPG…QEAETDVTGS (137 aa)) form a disordered region. Positions 207-310 (PGFGGQQPGF…GGPQRPGMGG (104 aa)) are enriched in gly residues. Low complexity predominate over residues 311–323 (QPNSPNPRFNRPR).

The protein belongs to the SM50 family. Embryo spicule.

It is found in the secreted. Major matrix protein of the sea urchin embryo spicule which directs crystal growth in certain orientations and inhibit growth in others. This chain is 34 kDa spicule matrix protein, found in Lytechinus pictus (Painted sea urchin).